The primary structure comprises 360 residues: S-adenosylmethionine:tRNA ribosyltransferase-isomerase (360 aa).

The protein belongs to the QueA family. In terms of assembly, monomer.

It is found in the cytoplasm. It carries out the reaction 7-aminomethyl-7-carbaguanosine(34) in tRNA + S-adenosyl-L-methionine = epoxyqueuosine(34) in tRNA + adenine + L-methionine + 2 H(+). Its pathway is tRNA modification; tRNA-queuosine biosynthesis. Its function is as follows. Transfers and isomerizes the ribose moiety from AdoMet to the 7-aminomethyl group of 7-deazaguanine (preQ1-tRNA) to give epoxyqueuosine (oQ-tRNA). The chain is S-adenosylmethionine:tRNA ribosyltransferase-isomerase from Rhodopseudomonas palustris (strain BisB5).